A 371-amino-acid polypeptide reads, in one-letter code: Glutamate 5-kinase (371 aa).

Residue Lys14 coordinates ATP. Substrate contacts are provided by Ser52, Asp139, and Asn151. 171–172 (SD) serves as a coordination point for ATP. The 79-residue stretch at 275–353 (EGRLHLDSGA…ADLAMELGPS (79 aa)) folds into the PUA domain.

It belongs to the glutamate 5-kinase family.

Its subcellular location is the cytoplasm. It catalyses the reaction L-glutamate + ATP = L-glutamyl 5-phosphate + ADP. It functions in the pathway amino-acid biosynthesis; L-proline biosynthesis; L-glutamate 5-semialdehyde from L-glutamate: step 1/2. In terms of biological role, catalyzes the transfer of a phosphate group to glutamate to form L-glutamate 5-phosphate. The polypeptide is Glutamate 5-kinase (Frankia casuarinae (strain DSM 45818 / CECT 9043 / HFP020203 / CcI3)).